A 550-amino-acid polypeptide reads, in one-letter code: PAB1-binding protein 1 (550 aa).

Residues 11-95 enclose the Sm domain; that stretch reads RLEYLYLNLV…IVMIEVQNAK (85 aa). 2 disordered regions span residues 201-296 and 441-550; these read HDDE…HKRM and GMGN…RVGK. The segment covering 214–223 has biased composition (basic and acidic residues); sequence DVHRPQEKKP. Positions 244–262 are enriched in low complexity; it reads AAAAPATAPTTAPAAAPAP. Over residues 263-281 the composition is skewed to pro residues; it reads AAAPPAAAPAAAAPPPPPA.

Belongs to the ataxin-2 family. As to quaternary structure, forms a complex composed of at least MKT1, PBP1, XAC1 and LSM12. Forms a complex composed of at least MKT1L, PBP1, XAC1 and LSM12. Within the complex, interacts with MKT1 (via C-terminus); the interaction is direct. Interacts (via C-terminus) with ZC3H11; the interaction is direct.

Its subcellular location is the cytoplasm. The protein resides in the cytosol. It is found in the stress granule. Functionally, involved in post-transcriptional regulation of gene expression. Promotes mRNA stabilization by bridging poly(A)-binding protein to mRNAs. This chain is PAB1-binding protein 1, found in Trypanosoma brucei brucei (strain 927/4 GUTat10.1).